Consider the following 348-residue polypeptide: Anthranilate phosphoribosyltransferase (348 aa).

5-phospho-alpha-D-ribose 1-diphosphate is bound by residues G87, 90-91, T95, 97-100, 115-123, and S127; these read GD, NIST, and KHGNRSASG. Anthranilate is bound at residue G87. S99 is a Mg(2+) binding site. An anthranilate-binding site is contributed by N118. R173 is a binding site for anthranilate. Mg(2+) is bound by residues D232 and E233.

Belongs to the anthranilate phosphoribosyltransferase family. In terms of assembly, homodimer. The cofactor is Mg(2+).

It catalyses the reaction N-(5-phospho-beta-D-ribosyl)anthranilate + diphosphate = 5-phospho-alpha-D-ribose 1-diphosphate + anthranilate. Its pathway is amino-acid biosynthesis; L-tryptophan biosynthesis; L-tryptophan from chorismate: step 2/5. In terms of biological role, catalyzes the transfer of the phosphoribosyl group of 5-phosphorylribose-1-pyrophosphate (PRPP) to anthranilate to yield N-(5'-phosphoribosyl)-anthranilate (PRA). The polypeptide is Anthranilate phosphoribosyltransferase (Synechococcus sp. (strain WH7803)).